The chain runs to 304 residues: Glycine--tRNA ligase alpha subunit (304 aa).

This sequence belongs to the class-II aminoacyl-tRNA synthetase family. In terms of assembly, tetramer of two alpha and two beta subunits.

It localises to the cytoplasm. The enzyme catalyses tRNA(Gly) + glycine + ATP = glycyl-tRNA(Gly) + AMP + diphosphate. The polypeptide is Glycine--tRNA ligase alpha subunit (Pectobacterium carotovorum subsp. carotovorum (strain PC1)).